Here is a 346-residue protein sequence, read N- to C-terminus: Aldose 1-epimerase (346 aa).

A substrate-binding site is contributed by Arg79. His175 acts as the Proton donor in catalysis. Position 245 (Asp245) interacts with substrate. Glu309 functions as the Proton acceptor in the catalytic mechanism.

The protein belongs to the aldose epimerase family.

Its subcellular location is the cytoplasm. It catalyses the reaction alpha-D-glucose = beta-D-glucose. It participates in carbohydrate metabolism; hexose metabolism. Its function is as follows. Mutarotase converts alpha-aldose to the beta-anomer. It is active on D-glucose, L-arabinose, D-xylose, D-galactose, maltose and lactose. This is Aldose 1-epimerase (galM) from Escherichia coli (strain K12).